We begin with the raw amino-acid sequence, 217 residues long: Large ribosomal subunit protein uL3 (217 aa).

Gln154 is subject to N5-methylglutamine.

Belongs to the universal ribosomal protein uL3 family. Part of the 50S ribosomal subunit. Forms a cluster with proteins L14 and L19. Methylated by PrmB.

One of the primary rRNA binding proteins, it binds directly near the 3'-end of the 23S rRNA, where it nucleates assembly of the 50S subunit. The polypeptide is Large ribosomal subunit protein uL3 (Burkholderia ambifaria (strain ATCC BAA-244 / DSM 16087 / CCUG 44356 / LMG 19182 / AMMD) (Burkholderia cepacia (strain AMMD))).